The chain runs to 429 residues: FAD-dependent monooxygenase azaH (429 aa).

The chain crosses the membrane as a helical span at residues 5 to 25 (SIEVAIIGAGITGITLALGLL). FAD is bound by residues Glu-35 and Gly-48. Asn-75 and Asn-87 each carry an N-linked (GlcNAc...) asparagine glycan. Residue Arg-116 coordinates FAD. Residue Arg-199 is part of the active site. FAD is bound by residues Asp-315 and Ala-328.

Belongs to the paxM FAD-dependent monooxygenase family. It depends on FAD as a cofactor.

The protein localises to the membrane. The protein operates within secondary metabolite biosynthesis. FAD-dependent monooxygenase; part of the gene cluster that mediates the biosynthesis of azaphilones, a class of fungal metabolites characterized by a highly oxygenated pyrano-quinone bicyclic core and exhibiting a broad range of bioactivities. In the first step, the non-reducing polyketide synthase azaA forms the hexaketide precursor from successive condensations of five malonyl-CoA units, presumably with a simple acetyl-CoA starter unit. The reactive polyketide chain then undergoes a PT-mediated C2-C7 cyclization to afford the aromatic ring and is eventually released as an aldehyde through the R-domain. The putative ketoreductase azaE is proposed to catalyze the reduction of the terminal ketone resulting in the early culture product FK17-P2a. The monooxygenase azaH was demonstrated to be the only enzyme required to convert FK17-P2a to azanigerone E. AzaH first hydroxylates the benzaldehyde intermediate FK17-P2a at C4, which triggers the formation of the pyran-ring to afford azanigerone E. In parallel, the 2,4-dimethylhexanoyl chain is synthesized by the HR-PKS azaB and is proposed to be transferred to the C4-hydroxyl of azanigerone E by the acyltransferase azaD directly from the ACP domain of azaB. Alternatively, the 2,4-dimethyl-hexanoyl chain may be offloaded from the HR-PKS as a carboxylic acid and converted to an acyl-CoA by azaF. The resulting acyl-CoA molecule could then be taken up as a substrate by AzaD to form azanigerone B. To yield the carboxylic acid substituent in azanigerone A, the hydroxypropyl side chain of azanigerone B would need to undergo a C-C oxidative cleavage catalyzed by cytochrome P450 AzaI. AzaI is proposed to act on a vicinal diol that leads to a C-C bond scission either through an alkoxyradical intermediate or a peroxy complex. In the biosynthesis of azanigerone A, azanigerone B first undergoes hydroxylation at C10, possibly catalyzed by one of the two FAD-dependent monooxygenases encoded in the cluster, azaG or azaL, resulting in the vicinal diol azanigerone C. Oxidative cleavage of azanigerone C by azaI would yield the corresponding aldehyde derivative of azanigerone A. Finally, the dehydrogenase azaJ is proposed to convert the aldehyde functional group into the carboxylic acid, completing the conversion from azanigerone B to azanigerone A. Alternatively, the oxidation of aldehyde to carboxylic acid may be catalyzed by the same P450 enzyme azaI via consecutive oxidation or by endogenous alcohol dehydrogenase. This chain is FAD-dependent monooxygenase azaH, found in Aspergillus niger (strain ATCC 1015 / CBS 113.46 / FGSC A1144 / LSHB Ac4 / NCTC 3858a / NRRL 328 / USDA 3528.7).